The sequence spans 157 residues: UPF0262 protein Rleg2_0240 (157 aa).

This sequence belongs to the UPF0262 family.

In Rhizobium leguminosarum bv. trifolii (strain WSM2304), this protein is UPF0262 protein Rleg2_0240.